Reading from the N-terminus, the 608-residue chain is Amino-acid acetyltransferase, mitochondrial (608 aa).

One can recognise an N-acetyltransferase domain in the interval Leu-402 to Leu-604.

The protein belongs to the acetyltransferase family.

The protein localises to the mitochondrion. The enzyme catalyses L-glutamate + acetyl-CoA = N-acetyl-L-glutamate + CoA + H(+). Its pathway is amino-acid biosynthesis; L-arginine biosynthesis; N(2)-acetyl-L-ornithine from L-glutamate: step 1/4. Its function is as follows. N-acetylglutamate synthase involved in arginine biosynthesis. This is Amino-acid acetyltransferase, mitochondrial (ARG2) from Yarrowia lipolytica (strain CLIB 122 / E 150) (Yeast).